A 198-amino-acid chain; its full sequence is Transcription antitermination protein NusB (198 aa).

Belongs to the NusB family.

Functionally, involved in transcription antitermination. Required for transcription of ribosomal RNA (rRNA) genes. Binds specifically to the boxA antiterminator sequence of the ribosomal RNA (rrn) operons. The sequence is that of Transcription antitermination protein NusB from Methylococcus capsulatus (strain ATCC 33009 / NCIMB 11132 / Bath).